The sequence spans 678 residues: DNA ligase (678 aa).

Residues 36-40, 85-86, and glutamate 117 contribute to the NAD(+) site; these read DVVYD and SL. Lysine 119 serves as the catalytic N6-AMP-lysine intermediate. NAD(+)-binding residues include arginine 140, glutamate 177, lysine 294, and lysine 318. The Zn(2+) site is built by cysteine 412, cysteine 415, cysteine 430, and cysteine 435. One can recognise a BRCT domain in the interval 598-678; that stretch reads ISSTPLAGKT…QLLKMINPQE (81 aa).

This sequence belongs to the NAD-dependent DNA ligase family. LigA subfamily. Mg(2+) serves as cofactor. The cofactor is Mn(2+).

The enzyme catalyses NAD(+) + (deoxyribonucleotide)n-3'-hydroxyl + 5'-phospho-(deoxyribonucleotide)m = (deoxyribonucleotide)n+m + AMP + beta-nicotinamide D-nucleotide.. Functionally, DNA ligase that catalyzes the formation of phosphodiester linkages between 5'-phosphoryl and 3'-hydroxyl groups in double-stranded DNA using NAD as a coenzyme and as the energy source for the reaction. It is essential for DNA replication and repair of damaged DNA. This is DNA ligase from Gloeothece citriformis (strain PCC 7424) (Cyanothece sp. (strain PCC 7424)).